Here is a 712-residue protein sequence, read N- to C-terminus: MLGKGIKKSWGWLGLTVLLLGSPCGWAAEFSASFKGTDIQEFINTVSKNLNKTVIIDPTVRGTISVRSYDMMDEGQYYQFFLSVLDVYGFSVVPMDNGVLKVIRSKDAKSSSIPLANNEQPGVGDELVTRVVPLNNVAARDLAPLLRQLNDNAGAGTVVHYEPSNVLLMTGRAAVIKRLVDIVNTVDKTGDREMITVSLNYASAEDVAKLVNDLNKTDEKNALPSTMLANVVADGRTNSVVVSGEENTSPCAVEMIRQLDRKQVAQGGTKVIYLKYAKALDLIEVLAGNGTSGNRNSSSTNSSRPSSTRSSSTLNNSNSSSSGSSSGSGSSSSSSSSSMGFGSAFGSANSSGGRTIVIQGKEVTVRAHDQTNSLIITRPPDIMRDLEQVINQLDIRRPQVLVEAIIAEIQDADGLNLGIQWANKRAGMTQFTNTGIPISTAMIGTDQFRSDGTLTTAYASALSNFNGITAGFYRGNWSMLLTALSSDGKNDVLATPSIVTLDNMEATFNVGQEVPVLTGSQTTVGSGDNIFNTVERKTVGIKLRVKPQINEGDSVLLQIEQEVSSVAEGNGSSNSSLGVTFNTRTVNNAVMVTNRETVVVGGLLDKTAIETNNKVPLLGDIPWLGSLFRSKTQTMSKRNLMLFLRPTIIRDPQQYQQASISKYNSFNNEQQQQRGQGNSVLDNNTLRLSGGNTYTFRQVQSSISAFYQPEGR.

Positions 1 to 27 are cleaved as a signal peptide; the sequence is MLGKGIKKSWGWLGLTVLLLGSPCGWA. The tract at residues 28 to 124 is N0; it reads AEFSASFKGT…LANNEQPGVG (97 aa). The interval 126 to 190 is N1; sequence ELVTRVVPLN…DIVNTVDKTG (65 aa). The interval 191–264 is N2; sequence DREMITVSLN…MIRQLDRKQV (74 aa). The segment at 267 to 394 is N3; sequence GGTKVIYLKY…DLEQVINQLD (128 aa). The disordered stretch occupies residues 288–342; sequence GNGTSGNRNSSSTNSSRPSSTRSSSTLNNSNSSSSGSSSGSGSSSSSSSSSMGFG. Residues 399-651 are secretin; that stretch reads QVLVEAIIAE…LFLRPTIIRD (253 aa). Residues 653–712 form a s domain region; that stretch reads QQYQQASISKYNSFNNEQQQQRGQGNSVLDNNTLRLSGGNTYTFRQVQSSISAFYQPEGR.

Belongs to the bacterial secretin family. GSP D subfamily. Forms a cylindrical channel with 15 subunits.

It is found in the cell outer membrane. Functionally, involved in a type II secretion system (T2SS, formerly general secretion pathway, GSP) for the export of proteins. Required for the translocation of the multiple pectic enzymes. This subunit forms the outer membrane channel. In Dickeya chrysanthemi (Pectobacterium chrysanthemi), this protein is Secretin OutD (outD).